Reading from the N-terminus, the 440-residue chain is F-box protein pof12 (440 aa).

One can recognise an F-box domain in the interval 8–54 (KNPASIFSHETLLHVLNDLSAHDLAALERVSRSWNSIVRRSSVWHNL).

As to quaternary structure, interacts with skp1.

The protein resides in the nucleus. This Schizosaccharomyces pombe (strain 972 / ATCC 24843) (Fission yeast) protein is F-box protein pof12 (pof12).